A 458-amino-acid chain; its full sequence is Riboflavin transporter 2 (458 aa).

The next 5 helical transmembrane spans lie at 11–31 (LFGM…PLIV), 38–58 (WYLP…PLFV), 73–93 (PVIY…AFFW), 97–117 (VPLA…LLSV), and 146–166 (GVSG…VVHC). N-linked (GlcNAc...) asparagine glycosylation is found at asparagine 168, asparagine 176, asparagine 182, and asparagine 199. The helical transmembrane segment at 204 to 224 (VFFLFLSAMMVVCLAAFLLLN) threads the bilayer. The disordered stretch occupies residues 249-274 (DQALSLSHRPQEEKPMISSPDSHRRA). The next 5 membrane-spanning stretches (helical) occupy residues 279 to 299 (FGTG…LAWV), 325 to 345 (LAAT…MFLP), 349 to 369 (LVLI…IMAM), 388 to 408 (IVIA…IIGV), and 417 to 437 (ALVW…LSMF).

It belongs to the riboflavin transporter family.

It localises to the cell membrane. The catalysed reaction is riboflavin(in) = riboflavin(out). In terms of biological role, plasma membrane transporter mediating the uptake by cells of the water soluble vitamin B2/riboflavin that plays a key role in biochemical oxidation-reduction reactions of the carbohydrate, lipid, and amino acid metabolism. This Salmo salar (Atlantic salmon) protein is Riboflavin transporter 2 (rft2).